The sequence spans 118 residues: Elicitin (118 aa).

The signal sequence occupies residues M1–A20. 3 disulfide bridges follow: C23/C91, C47/C76, and C71/C115.

The protein belongs to the elicitin family.

It localises to the secreted. Its function is as follows. Induces local and distal defense responses (incompatible hypersensitive reaction) in plants from the solanaceae and cruciferae families. Elicits leaf necrosis and causes the accumulation of pathogenesis-related proteins. Might interact with the lipidic molecules of the plasma membrane. The sequence is that of Elicitin (PARA1) from Phytophthora nicotianae (Potato buckeye rot agent).